The primary structure comprises 360 residues: UDP-N-acetylglucosamine--N-acetylmuramyl-(pentapeptide) pyrophosphoryl-undecaprenol N-acetylglucosamine transferase (360 aa).

UDP-N-acetyl-alpha-D-glucosamine is bound by residues 15 to 17, Asn128, Arg164, Ser192, Ile247, and Gln292; that span reads TGG.

Belongs to the glycosyltransferase 28 family. MurG subfamily.

It is found in the cell inner membrane. The enzyme catalyses di-trans,octa-cis-undecaprenyl diphospho-N-acetyl-alpha-D-muramoyl-L-alanyl-D-glutamyl-meso-2,6-diaminopimeloyl-D-alanyl-D-alanine + UDP-N-acetyl-alpha-D-glucosamine = di-trans,octa-cis-undecaprenyl diphospho-[N-acetyl-alpha-D-glucosaminyl-(1-&gt;4)]-N-acetyl-alpha-D-muramoyl-L-alanyl-D-glutamyl-meso-2,6-diaminopimeloyl-D-alanyl-D-alanine + UDP + H(+). It functions in the pathway cell wall biogenesis; peptidoglycan biosynthesis. Its function is as follows. Cell wall formation. Catalyzes the transfer of a GlcNAc subunit on undecaprenyl-pyrophosphoryl-MurNAc-pentapeptide (lipid intermediate I) to form undecaprenyl-pyrophosphoryl-MurNAc-(pentapeptide)GlcNAc (lipid intermediate II). This Blochmanniella floridana protein is UDP-N-acetylglucosamine--N-acetylmuramyl-(pentapeptide) pyrophosphoryl-undecaprenol N-acetylglucosamine transferase.